The chain runs to 257 residues: Putative carboxymethylenebutenolidase (257 aa).

Residues Cys148, Asp195, and His226 contribute to the active site.

Belongs to the dienelactone hydrolase family.

It carries out the reaction 2-(5-oxo-2,5-dihydrofuran-2-ylidene)acetate + H2O = 4-oxohex-2-enedioate + H(+). This Saccharolobus solfataricus (strain ATCC 35092 / DSM 1617 / JCM 11322 / P2) (Sulfolobus solfataricus) protein is Putative carboxymethylenebutenolidase.